A 377-amino-acid polypeptide reads, in one-letter code: Succinyl-diaminopimelate desuccinylase (377 aa).

Histidine 66 lines the Zn(2+) pocket. Aspartate 68 is a catalytic residue. Aspartate 99 is a binding site for Zn(2+). The active-site Proton acceptor is the glutamate 133. Zn(2+) is bound by residues glutamate 134, glutamate 163, and histidine 349.

It belongs to the peptidase M20A family. DapE subfamily. As to quaternary structure, homodimer. Requires Zn(2+) as cofactor. Co(2+) serves as cofactor.

It catalyses the reaction N-succinyl-(2S,6S)-2,6-diaminopimelate + H2O = (2S,6S)-2,6-diaminopimelate + succinate. It participates in amino-acid biosynthesis; L-lysine biosynthesis via DAP pathway; LL-2,6-diaminopimelate from (S)-tetrahydrodipicolinate (succinylase route): step 3/3. Its function is as follows. Catalyzes the hydrolysis of N-succinyl-L,L-diaminopimelic acid (SDAP), forming succinate and LL-2,6-diaminopimelate (DAP), an intermediate involved in the bacterial biosynthesis of lysine and meso-diaminopimelic acid, an essential component of bacterial cell walls. The protein is Succinyl-diaminopimelate desuccinylase of Legionella pneumophila (strain Corby).